A 283-amino-acid polypeptide reads, in one-letter code: Small ribosomal subunit protein uS3 (283 aa).

The KH type-2 domain occupies 39 to 107; it reads VRAYLKTKLK…PVHVNIEEIR (69 aa). The disordered stretch occupies residues 219-283; sequence ASDDDKKRRG…AAVSAEKAGE (65 aa). Over residues 221 to 236 the composition is skewed to basic and acidic residues; the sequence is DDDKKRRGPRRDDGKP. Positions 237–260 are enriched in low complexity; it reads SGRPRAPRPEGQPGAAAPGSAPAA.

The protein belongs to the universal ribosomal protein uS3 family. In terms of assembly, part of the 30S ribosomal subunit. Forms a tight complex with proteins S10 and S14.

Binds the lower part of the 30S subunit head. Binds mRNA in the 70S ribosome, positioning it for translation. The chain is Small ribosomal subunit protein uS3 from Janthinobacterium sp. (strain Marseille) (Minibacterium massiliensis).